We begin with the raw amino-acid sequence, 214 residues long: uncharacterized protein (214 aa).

The first 24 residues, 1-24 (MKIWIKAICITSFVIQMSACSSSA), serve as a signal peptide directing secretion. A TNase-like domain is found at 64–197 (ETVKGKVLHI…KEAKAGVWSI (134 aa)). Active-site residues include arginine 91, glutamate 99, and arginine 142.

This is an uncharacterized protein from Bacillus anthracis.